A 359-amino-acid chain; its full sequence is Peptide chain release factor 1 (359 aa).

Gln236 is modified (N5-methylglutamine).

Belongs to the prokaryotic/mitochondrial release factor family. In terms of processing, methylated by PrmC. Methylation increases the termination efficiency of RF1.

It is found in the cytoplasm. Peptide chain release factor 1 directs the termination of translation in response to the peptide chain termination codons UAG and UAA. The protein is Peptide chain release factor 1 of Streptococcus pneumoniae serotype 2 (strain D39 / NCTC 7466).